The sequence spans 239 residues: DNA damage-regulated autophagy modulator protein 1 (239 aa).

The next 6 helical transmembrane spans lie at Ile15–Gly35, Ser54–Thr74, Ile91–Val111, Val119–Leu139, Met162–Ser182, and Thr201–Ile221.

This sequence belongs to the DRAM/TMEM150 family.

The protein localises to the lysosome membrane. Functionally, lysosomal modulator of autophagy that plays a central role in p53/TP53-mediated apoptosis. The chain is DNA damage-regulated autophagy modulator protein 1 (dram1) from Xenopus laevis (African clawed frog).